We begin with the raw amino-acid sequence, 769 residues long: Probable protease Ga0334635_1659 (769 aa).

The tract at residues 118–167 (VARGSSDNNGAPPLSFTLSHGDPKSDPEPSSPSRLVNTGLSEAERPESPL) is disordered.

Functionally, probably a dedicated protease for substrate gasdermin bGSDM; cleaves the bGSDM precursor, releasing the pore-forming moiety, which integrates into the membrane and triggers cell death. Involved in defense against bacteriophages. Expression of gasdermin bGSDM and this neighboring protease is toxic in E.coli. This Vitiosangium sp. (strain GDMCC 1.1324) protein is Probable protease Ga0334635_1659.